Consider the following 255-residue polypeptide: Taurine import ATP-binding protein TauB (255 aa).

Residues 2–229 (LQISHLYADY…RFVAGESSRS (228 aa)) form the ABC transporter domain. ATP is bound at residue 34-41 (GPSGCGKT).

This sequence belongs to the ABC transporter superfamily. Taurine importer (TC 3.A.1.17.1) family. The complex is composed of two ATP-binding proteins (TauB), two transmembrane proteins (TauC) and a solute-binding protein (TauA).

Its subcellular location is the cell inner membrane. The enzyme catalyses taurine(out) + ATP + H2O = taurine(in) + ADP + phosphate + H(+). In terms of biological role, part of the ABC transporter complex TauABC involved in taurine import. Responsible for energy coupling to the transport system. This is Taurine import ATP-binding protein TauB from Escherichia coli O6:K15:H31 (strain 536 / UPEC).